A 242-amino-acid chain; its full sequence is Ribosomal RNA small subunit methyltransferase G (242 aa).

S-adenosyl-L-methionine is bound by residues Gly-81, Phe-86, Asp-104–Thr-106, Ala-132–Glu-133, and Arg-151.

This sequence belongs to the methyltransferase superfamily. RNA methyltransferase RsmG family.

The protein localises to the cytoplasm. Functionally, specifically methylates the N7 position of a guanine in 16S rRNA. The polypeptide is Ribosomal RNA small subunit methyltransferase G (Synechococcus elongatus (strain ATCC 33912 / PCC 7942 / FACHB-805) (Anacystis nidulans R2)).